Consider the following 1312-residue polypeptide: Retinoblastoma-like protein A (1312 aa).

Disordered stretches follow at residues 1 to 67, 168 to 231, 336 to 359, 536 to 611, 987 to 1023, 1168 to 1236, and 1249 to 1312; these read MMAH…NNEN, SSSS…KNSS, HNYN…NNNN, NNNN…IYGT, NNNN…NNNN, KKND…NNTE, and EESP…RLKS. The segment covering 10-67 has biased composition (low complexity); it reads TNINTKTTAPTTTTTEQQPEQQQQQPEQQQQEKQNNNNNNNNNNNNNNNINNNENNEN. The stretch at 36-117 forms a coiled coil; it reads EQQQQEKQNN…TSSALNVDQD (82 aa). Over residues 168–179 the composition is skewed to polar residues; the sequence is SSSSFQPDNNSK. Positions 180-189 are enriched in basic residues; that stretch reads IKGRKIRKTN. Positions 195-230 form a coiled coil; sequence NNDSNEEEEETTTDTEEEEEEDTLLNENNNSINKNS. Residues 198-218 are compositionally biased toward acidic residues; it reads SNEEEEETTTDTEEEEEEDTL. Composition is skewed to low complexity over residues 219-231, 337-359, and 536-595; these read LNEN…KNSS, NYNN…NNNN, and NNNN…SSSS. 3 stretches are compositionally biased toward low complexity: residues 1185–1234, 1251–1275, and 1286–1305; these read NNNN…NNNN, SPST…NNNK, and SPSS…SSSG.

The protein belongs to the retinoblastoma protein (RB) family.

It is found in the nucleus. Key regulator of entry into cell division. Directly involved in heterochromatin formation by maintaining overall chromatin structure and, in particular, that of constitutive heterochromatin by stabilizing histone methylation. Controls histone H4 'Lys-20' trimethylation. Probably acts as a transcription repressor by recruiting chromatin-modifying enzymes to promoters. Plays a dual role, regulating cell-cycle progression and transcriptional events leading to terminal differentiation. In the absence of a G1 phase, functions in late G2 controlling the expression of both S-phase and mitotic genes. Controls stalk/spore preference by suppressing the DIF response in cells destined for the spore pathway. DIF is a chlorinated hydroxyphenone made by cells of spore pathway that promotes stalk differentiation. This is Retinoblastoma-like protein A from Dictyostelium discoideum (Social amoeba).